Reading from the N-terminus, the 620-residue chain is MAAGVFKSFMRDFFAVKYDEQRNDPQAERLDGNGRLYPNCSSDVWLRSCEREIVDPIEGHHSGHIPKWICGSLLRNGPGSWKVGDMTFGHLFDCSALLHRFAIRNGRVTYQNRFVDTETLRKNRSAQRIVVTEFGTAAVPDPCHSIFDRFAAIFRPDSGTDNSMISIYPFGDQYYTFTETPFMHRINPCTLATEARICTTDFVGVVNHTSHPHVLPSGTVYNLGTTMTRSGPAYTILSFPHGEQMFEDAHVVATLPCRWKLHPGYMHTFGLTDHYFVIVEQPLSVSLTEYIKAQLGGQNLSACLKWFEDRPTLFHLIDRVSGKLVQTYESEAFFYLHIINCFERDGHVVVDICSYRNPEMINCMYLEAIANMQTNPNYATLFRGRPLRFVLPLGTIPPASIAKRGLVKSFSLAGLSAPQVSRTMKHSVSQYADITYMPTNGKQATAGEESPKRDAKRGRYEEENLVNLVTMEGSQAEAFQGTNGIQLRPEMLCDWGCETPRIYYERYMGKNYRYFYAISSDVDAVNPGTLIKVDVWNKSCLTWCEENVYPSEPIFVPSPDPKSEDDGVILASMVLGGLNDRYVGLIVLCAKTMTELGRCDFHTNGPVPKCLHGWFAPNAI.

Positions 211, 267, and 337 each coordinate Fe cation. The interval 440–459 (NGKQATAGEESPKRDAKRGR) is disordered. Residues 449-459 (ESPKRDAKRGR) are compositionally biased toward basic and acidic residues. Histidine 612 serves as a coordination point for Fe cation.

This sequence belongs to the carotenoid oxygenase family. It depends on Fe(2+) as a cofactor. In terms of tissue distribution, expression follows organogenesis of the larval Bolwig's organ (BO), which mediates larval photophobic behavior. In the adult, expression is restricted exclusively to the brain. Expressed in both neuronal cells and glia cells. Not active within photoreceptors. Active within neuronal cells within the central nervous system.

The enzyme catalyses all-trans-zeaxanthin + O2 = (3R)-11-cis-3-hydroxyretinal + (3R)-all-trans-3-hydroxyretinal. Its pathway is cofactor metabolism; retinol metabolism. Functionally, catalyzes the oxidative cleavage at the 15,15'-double bond of carotenoids and the simultaneous all-trans to 11-cis isomerization of one cleavage product. Carotenoids like 11-cis retinal can promote visual pigment biogenesis in the dark. Essential for the biosynthesis of the 3-hydroxyretinal chromophore of rhodopsin from zeaxanthin and for proper photoreceptor development. Also essential for larval light perception. This Drosophila melanogaster (Fruit fly) protein is Carotenoid isomerooxygenase (ninaB).